We begin with the raw amino-acid sequence, 190 residues long: Crossover junction endodeoxyribonuclease RuvC (190 aa).

Active-site residues include aspartate 7, glutamate 67, and aspartate 140. Residues aspartate 7, glutamate 67, and aspartate 140 each contribute to the Mg(2+) site.

This sequence belongs to the RuvC family. Homodimer which binds Holliday junction (HJ) DNA. The HJ becomes 2-fold symmetrical on binding to RuvC with unstacked arms; it has a different conformation from HJ DNA in complex with RuvA. In the full resolvosome a probable DNA-RuvA(4)-RuvB(12)-RuvC(2) complex forms which resolves the HJ. Requires Mg(2+) as cofactor.

It localises to the cytoplasm. The enzyme catalyses Endonucleolytic cleavage at a junction such as a reciprocal single-stranded crossover between two homologous DNA duplexes (Holliday junction).. Its function is as follows. The RuvA-RuvB-RuvC complex processes Holliday junction (HJ) DNA during genetic recombination and DNA repair. Endonuclease that resolves HJ intermediates. Cleaves cruciform DNA by making single-stranded nicks across the HJ at symmetrical positions within the homologous arms, yielding a 5'-phosphate and a 3'-hydroxyl group; requires a central core of homology in the junction. The consensus cleavage sequence is 5'-(A/T)TT(C/G)-3'. Cleavage occurs on the 3'-side of the TT dinucleotide at the point of strand exchange. HJ branch migration catalyzed by RuvA-RuvB allows RuvC to scan DNA until it finds its consensus sequence, where it cleaves and resolves the cruciform DNA. In Fusobacterium nucleatum subsp. nucleatum (strain ATCC 25586 / DSM 15643 / BCRC 10681 / CIP 101130 / JCM 8532 / KCTC 2640 / LMG 13131 / VPI 4355), this protein is Crossover junction endodeoxyribonuclease RuvC.